Reading from the N-terminus, the 459-residue chain is Cysteine--tRNA ligase (459 aa).

Residue Cys-28 participates in Zn(2+) binding. The 'HIGH' region motif lies at 30–40 (VTVYDLCHFGH). Residues Cys-209, His-234, and Glu-238 each contribute to the Zn(2+) site. The 'KMSKS' region signature appears at 266–270 (KMSKS). Lys-269 is an ATP binding site.

It belongs to the class-I aminoacyl-tRNA synthetase family. In terms of assembly, monomer. The cofactor is Zn(2+).

Its subcellular location is the cytoplasm. It catalyses the reaction tRNA(Cys) + L-cysteine + ATP = L-cysteinyl-tRNA(Cys) + AMP + diphosphate. This chain is Cysteine--tRNA ligase, found in Glaesserella parasuis serovar 5 (strain SH0165) (Haemophilus parasuis).